Here is a 346-residue protein sequence, read N- to C-terminus: KH domain-containing, RNA-binding, signal transduction-associated protein 3 (346 aa).

Positions 1–160 are involved in homodimerization; that stretch reads MEEKYLPELM…IKKFLIPDYN (160 aa). Lysine 4 participates in a covalent cross-link: Glycyl lysine isopeptide (Lys-Gly) (interchain with G-Cter in SUMO2). One can recognise a KH domain in the interval 61–127; it reads LIPVKQFPKF…AKYFHLNDDL (67 aa). Disordered stretches follow at residues 212 to 266 and 317 to 346; these read RPVA…QETY and GQEEWTNSRHKAPSARTAKGVYRDQPYGRY. Pro residues predominate over residues 253–262; the sequence is GYRPPPPPPT.

The protein belongs to the KHDRBS family. Self-associates to form homooligomers; dimerization increases RNA affinity. Interacts with KHDRBS2/SLM-1. Interacts with KHDRBS1/SAM68; heterooligomer formation of KHDRBS family proteins may modulate RNA substrate specificity. Interacts with the splicing regulatory proteins SFRS9, SAFB and YTHDC1. Interacts with HNRPL, RBMX, p85 subunit of PI3-kinase, SERPINB5. In terms of processing, phosphorylated on tyrosine residues by PTK6. Highly expressed in testis and brain. In adult cerebellum expressed predominantly in internal granular layer interneurons and in hippocampus is exclusively expressed in CA neurons; expression is restricted to neuronal subpopulations largely non-overlapping with expression of KHDRBS2/SLM-1.

The protein localises to the nucleus. RNA-binding protein that plays a role in the regulation of alternative splicing and influences mRNA splice site selection and exon inclusion. Binds preferentially to the 5'-[AU]UAAA-3' motif in vitro. Binds optimally to RNA containing 5'-[AU]UAA-3' as a bipartite motif spaced by more than 15 nucleotides. Binds poly(A). RNA-binding abilities are down-regulated by tyrosine kinase PTK6. Involved in splice site selection of vascular endothelial growth factor. In vitro regulates CD44 alternative splicing by direct binding to purine-rich exonic enhancer. Can regulate alternative splicing of neurexins NRXN1-3 in the laminin G-like domain 6 containing the evolutionary conserved neurexin alternative spliced segment 4 (AS4) involved in neurexin selective targeting to postsynaptic partners such as neuroligins and LRRTM family members. High concentrations in forebrain structures block splicing inclusion of NRXN1-3 AS4 exons while low concentrations favor their inclusion. Targeted, cell-type specific splicing regulation of NRXN1 at AS4 is involved in neuronal glutamatergic synapse function and plasticity and is linked to behavioral aspects. Regulates expression of KHDRBS2/SLIM-1 in defined neuron populations in the hippocampus by modifying its alternative splicing resulting in a transcript predicted to undergo nonsense-mediated decay. Can bind FABP9 mRNA. May play a role as a negative regulator of cell growth. Inhibits cell proliferation. The sequence is that of KH domain-containing, RNA-binding, signal transduction-associated protein 3 (Khdrbs3) from Mus musculus (Mouse).